Here is a 257-residue protein sequence, read N- to C-terminus: 4-hydroxy-tetrahydrodipicolinate reductase (257 aa).

Residues 8–13, 90–92, and 114–117 contribute to the NAD(+) site; these read GSTGRV, ATT, and ATNM. H146 acts as the Proton donor/acceptor in catalysis. H147 serves as a coordination point for (S)-2,3,4,5-tetrahydrodipicolinate. The active-site Proton donor is K150. 156–157 serves as a coordination point for (S)-2,3,4,5-tetrahydrodipicolinate; sequence GT.

It belongs to the DapB family.

Its subcellular location is the cytoplasm. It carries out the reaction (S)-2,3,4,5-tetrahydrodipicolinate + NAD(+) + H2O = (2S,4S)-4-hydroxy-2,3,4,5-tetrahydrodipicolinate + NADH + H(+). The enzyme catalyses (S)-2,3,4,5-tetrahydrodipicolinate + NADP(+) + H2O = (2S,4S)-4-hydroxy-2,3,4,5-tetrahydrodipicolinate + NADPH + H(+). The protein operates within amino-acid biosynthesis; L-lysine biosynthesis via DAP pathway; (S)-tetrahydrodipicolinate from L-aspartate: step 4/4. Catalyzes the conversion of 4-hydroxy-tetrahydrodipicolinate (HTPA) to tetrahydrodipicolinate. In Aliarcobacter butzleri (strain RM4018) (Arcobacter butzleri), this protein is 4-hydroxy-tetrahydrodipicolinate reductase.